Reading from the N-terminus, the 557-residue chain is Probable asparagine synthetase [glutamine-hydrolyzing] (557 aa).

Residue Cys2 is the For GATase activity of the active site. A Glutamine amidotransferase type-2 domain is found at 2 to 188 (CGILAILNSL…PGHYFSSKTK (187 aa)). L-glutamine-binding positions include 50–54 (RLAIV), 75–77 (NGE), and Asp101. The Asparagine synthetase domain maps to 217–466 (AIKEAFEQAV…LPSSVLWRQK (250 aa)). ATP is bound by residues Leu239, Ile279, and 353–354 (SG). The tract at residues 538–557 (WGASQDPSGRAQKVHLSTTE) is disordered.

The catalysed reaction is L-aspartate + L-glutamine + ATP + H2O = L-asparagine + L-glutamate + AMP + diphosphate + H(+). The protein operates within amino-acid biosynthesis; L-asparagine biosynthesis; L-asparagine from L-aspartate (L-Gln route): step 1/1. This chain is Probable asparagine synthetase [glutamine-hydrolyzing] (asns), found in Dictyostelium discoideum (Social amoeba).